The following is a 473-amino-acid chain: MFS transporter prlG (473 aa).

Over residues 1–12 (MSSTDAEAKNEE) the composition is skewed to basic and acidic residues. A disordered region spans residues 1–27 (MSSTDAEAKNEEAVDWEGPDDPENPRN). The segment covering 13 to 22 (AVDWEGPDDP) has biased composition (acidic residues). The next 11 membrane-spanning stretches (helical) occupy residues 37–57 (VLLVSSFTLYSNLAAVMFAPG), 71–91 (IVASLTVSIYILGYVFGPFLL), 101–121 (LIIYHICNAVYIAFTIGCALS), 125–145 (AMFLVFRFICGCAASAPMAIG), 163–183 (ALFGLGPLLGPVIGPVVGGFV), 191–211 (WTFWLVLILAGVVSLLALVLM), 266–286 (PIVFLLSVYCAFMFGLTYLLF), 305–325 (GLAYLGLGVGMIISIGLFAVL), 345–365 (LILMIWSSPLVPIGFFWYGWS), 372–392 (WIVPILGTSVIGLGAFLILMP), and 409–429 (ALAANTVLRSLFGAVLPLAGP).

Belongs to the major facilitator superfamily.

It localises to the cell membrane. Its function is as follows. Efflux pump that might be required for efficient secretion of pyrrolocin or other secondary metabolies produced by the pyrrolocin gene cluster. This Fungal sp. (strain NRRL 50135) protein is MFS transporter prlG.